The sequence spans 117 residues: Non-specific lipid-transfer protein 2 (117 aa).

Residues 1–25 (MAGLMKLACLVLACMIVAGPITSNA) form the signal peptide. Cystine bridges form between C29/C76, C39/C53, C54/C99, and C74/C113.

It belongs to the plant LTP family.

Functionally, plant non-specific lipid-transfer proteins transfer phospholipids as well as galactolipids across membranes. May play a role in wax or cutin deposition in the cell walls of expanding epidermal cells and certain secretory tissues. This Brassica napus (Rape) protein is Non-specific lipid-transfer protein 2 (LTP2).